Reading from the N-terminus, the 368-residue chain is Biglycan (368 aa).

Positions M1–A16 are cleaved as a signal peptide. Residues L17–N37 constitute a propeptide that is removed on maturation. O-linked (Xyl...) (glycosaminoglycan) serine glycans are attached at residues S42 and S47. Intrachain disulfides connect C63-C69 and C67-C76. 12 LRR repeats span residues K82 to I102, S103 to I126, S127 to L150, V151 to I171, R172 to L195, E196 to L220, T221 to I241, Q242 to I265, R266 to L289, A290 to I312, T313 to V342, and P343 to K368. S180 and S198 each carry an O-linked (Xyl...) (glycosaminoglycan) serine glycan. N270 and N311 each carry an N-linked (GlcNAc...) asparagine glycan. Cysteines 321 and 354 form a disulfide.

The protein belongs to the small leucine-rich proteoglycan (SLRP) family. SLRP class I subfamily. In terms of assembly, homodimer. Forms a ternary complex with MFAP2 and ELN. Post-translationally, the two attached glycosaminoglycan chains can be either chondroitin sulfate or dermatan sulfate. In terms of tissue distribution, detected in placenta (at protein level). Found in several connective tissues, especially in articular cartilages.

The protein localises to the secreted. It is found in the extracellular space. It localises to the extracellular matrix. May be involved in collagen fiber assembly. In Homo sapiens (Human), this protein is Biglycan (BGN).